The chain runs to 162 residues: Allophycocyanin beta chain (162 aa).

An N4-methylasparagine modification is found at Asn-72. (2R,3E)-phycocyanobilin is bound at residue Cys-82.

It belongs to the phycobiliprotein family. Heterodimer of an alpha and a beta chain. In terms of processing, contains one covalently linked phycocyanobilin chromophore.

It is found in the cellular thylakoid membrane. In terms of biological role, light-harvesting photosynthetic bile pigment-protein from the phycobiliprotein complex. Allophycocyanin has a maximum absorption at approximately 650 nanometers. The chain is Allophycocyanin beta chain from Microchaete diplosiphon (Fremyella diplosiphon).